The chain runs to 305 residues: Dihydroorotate dehydrogenase A (fumarate) (305 aa).

FMN contacts are provided by residues Ser-21 and 45–46 (KS). Residues Lys-45, 69-73 (NAIGL), and Asn-129 contribute to the substrate site. Asn-129 serves as a coordination point for FMN. The active-site Nucleophile is the Cys-132. Lys-167 and Ile-193 together coordinate FMN. 194–195 (NT) contributes to the substrate binding site. FMN contacts are provided by residues Gly-219 and 245–246 (GG).

Belongs to the dihydroorotate dehydrogenase family. Type 1 subfamily. In terms of assembly, homodimer. Requires FMN as cofactor.

The protein localises to the cytoplasm. The catalysed reaction is (S)-dihydroorotate + fumarate = orotate + succinate. It functions in the pathway pyrimidine metabolism; UMP biosynthesis via de novo pathway. In terms of biological role, catalyzes the conversion of dihydroorotate to orotate with fumarate as the electron acceptor. The chain is Dihydroorotate dehydrogenase A (fumarate) (pyrD) from Lactiplantibacillus plantarum (strain ATCC BAA-793 / NCIMB 8826 / WCFS1) (Lactobacillus plantarum).